The chain runs to 86 residues: Small ribosomal subunit protein bS18 (86 aa).

Belongs to the bacterial ribosomal protein bS18 family. In terms of assembly, part of the 30S ribosomal subunit. Forms a tight heterodimer with protein bS6.

Its function is as follows. Binds as a heterodimer with protein bS6 to the central domain of the 16S rRNA, where it helps stabilize the platform of the 30S subunit. This chain is Small ribosomal subunit protein bS18, found in Campylobacter concisus (strain 13826).